Here is a 289-residue protein sequence, read N- to C-terminus: N-methyltransferase FrzE (289 aa).

The protein belongs to the methyltransferase superfamily.

It carries out the reaction (1S,4S)-4-[(4-hydroxyphenyl)methyl]-2,5-diazaspiro[bicyclo[3.2.1]octane-6,1'-cyclohexan]-4'-one + S-adenosyl-L-methionine = (1S,4S)-4-[(4-hydroxyphenyl)methyl]-2-methyl-2,5-diazaspiro[bicyclo[3.2.1]octane-6,1'-cyclohexan]-4'-one + S-adenosyl-L-homocysteine + H(+). The catalysed reaction is (1S,4S)-4-[(4-methoxyphenyl)methyl]-2,5-diazaspiro[bicyclo[3.2.1]octane-6,1'-cyclohexan]-4'-one + S-adenosyl-L-methionine = (1S,4S)-4-[(4-methoxyphenyl)methyl]-2-methyl-2,5-diazaspiro[bicyclo[3.2.1]octane-6,1'-cyclohexan]-4'-one + S-adenosyl-L-homocysteine + H(+). The protein operates within secondary metabolite biosynthesis. Its function is as follows. N-methyltransferase; part of the gene cluster that mediates the biosynthesis of the alkaloid (-)-FR901483, a potent immunosuppressant that shows efficacy in animal models and a probable inhibitor of purine nucleotide biosynthesis by targeting phosphoribosylpyrophosphate amidotransferase (PPAT). Within the pathway, FrzE methylates the amine at position C10'. The biosynthesis of (-)-FR901483 starts with the condensation of two L-tyrosines to yield (S,S)-dityrosyl-piperazine. This process occurs in 3 steps with the non-canonical nonribosomal peptide synthetase FrzA catalyzing the reduction of L-tyrosine into L-tyrosinal, the spontaneous condensation of 2 L-tyrosinal units, and the subsequent reduction by the NmrA-like family domain-containing oxidoreductase FrzB. The cytochrome P450 monooxygenase FrzC then performs coupling between N10 and C1' to morph the piperazine into a 1,4-diazabicyclo[3.2.1]octane spiro-fused to a 2,5-cyclohexadienone. The dienone portion is further reduced to cyclohexanone by the flavin-dependent reductase FrzD. The methyltranserases (MTs) FrzE and FrzF are then involved in the methylation at the C10' amine and the C4 phenolic oxygen, respectively. The order of the two MTs appear to be interchangeable. Cleavage of the C9-N10' bond by the dioxygenase FrzG then leads to formation of a conjugated iminium. In addition to the oxidation of C9, an additional dehydrogenation between C7 and C8 can occur to give a likely shunt product. The next biosynthetic step is the intramolecular aldol condensation catalyzed by the newly identified aldolase FrzH to yield an aza-tricyclic product with the formation of a C9-C3' bond. The short-chain dehydrogenase/reductase FrzI then produces dephospho-(-)-FR901483 that is phosphorylated at C4'-OH into (-)-FR901483 by the phosphotransferase FrzJ. This chain is N-methyltransferase FrzE, found in Cladobotryum sp.